Reading from the N-terminus, the 499-residue chain is Maturase K (499 aa).

The protein belongs to the intron maturase 2 family. MatK subfamily.

The protein localises to the plastid. The protein resides in the chloroplast. Usually encoded in the trnK tRNA gene intron. Probably assists in splicing its own and other chloroplast group II introns. This Gymnocladus chinensis (Soap tree) protein is Maturase K.